Consider the following 193-residue polypeptide: Cerebellin-1 (193 aa).

Positions M1–G21 are cleaved as a signal peptide. N23 is a glycosylation site (N-linked (GlcNAc...) asparagine). The interval C34 to C38 is essential for interaction with NRXN1 and linker of two C1q trimers into disulfide-linked hexamers. The C1q domain maps to S57–L193. Residues V62–L193 are necessary for interaction with CBLN3, and homotrimerization. An N-linked (GlcNAc...) asparagine glycan is attached at N79. Positions Y122–D147 are essential for interaction with GRID2.

As to quaternary structure, homohexamer; disulfide-linked homotrimers. The trimers are assembled via the globular C1q domains. The trimers associate via N-terminal cysteine residues to form disulfide-linked hexamers. May form oligomers with CBLN2, CBLN3 and CBLN4 prior to secretion. Once secreted, does not interact with other CBLN family members. Interacts with GRID1. Interacts with NRXN1 and NRXN2 long (alpha) and short (beta) isoforms produced by alternative promoter usage. Competes with NLGN1 for NRXN1-binding. Weakly interacts with NRXN3 short isoform and not at all with NRXN3 long isoform. Interacts (via C1q domain) with GRID2; GRID2-binding is calcium-independent; CBLN1 hexamers anchor GRID2 N-terminal domain dimers to monomeric NRXN1 isoform beta; promotes synaptogenesis and mediates the D-Serine-dependent long term depression signals and AMPA receptor endocytosis. The proteolytic processing to yield cerebellin seems to occur either prior to the secretion by presynaptic neurons and subsequent oligomerization or in some other location after release of the mature protein. In terms of processing, sialoglycoprotein.

The protein localises to the secreted. It localises to the postsynaptic cell membrane. Its function is as follows. Required for synapse integrity and synaptic plasticity. During cerebellar synapse formation, essential for the matching and maintenance of pre- and post-synaptic elements at parallel fiber-Purkinje cell synapses, the establishment of the proper pattern of climbing fiber-Purkinje cell innervation, and induction of long-term depression at parallel fiber-Purkinje cell synapses. Plays a role as a synaptic organizer that acts bidirectionally on both pre- and post-synaptic components. On the one hand induces accumulation of synaptic vesicles in the pre-synaptic part by binding with NRXN1 and in other hand induces clustering of GRID2 and its associated proteins at the post-synaptic site through association of GRID2. NRXN1-CBLN1-GRID2 complex directly induces parallel fiber protrusions that encapsulate spines of Purkinje cells leading to accumulation of GRID2 and synaptic vesicles. Required for CBLN3 export from the endoplasmic reticulum and secretion. NRXN1-CBLN1-GRID2 complex mediates the D-Serine-dependent long term depression signals and AMPA receptor endocytosis. Essential for long-term maintenance but not establishment of excitatory synapses. Inhibits the formation and function of inhibitory GABAergic synapses in cerebellar Purkinje cells. In terms of biological role, the cerebellin peptide exerts neuromodulatory functions. Directly stimulates norepinephrine release via the adenylate cyclase/PKA-dependent signaling pathway; and indirectly enhances adrenocortical secretion in vivo, through a paracrine mechanism involving medullary catecholamine release. The protein is Cerebellin-1 of Bos taurus (Bovine).